Here is a 615-residue protein sequence, read N- to C-terminus: Dihydroxy-acid dehydratase (615 aa).

Mg(2+) is bound at residue Asp-81. Cys-122 is a [2Fe-2S] cluster binding site. Residues Asp-123 and Lys-124 each coordinate Mg(2+). Lys-124 carries the post-translational modification N6-carboxylysine. A [2Fe-2S] cluster-binding site is contributed by Cys-195. Residue Glu-491 coordinates Mg(2+). Ser-517 (proton acceptor) is an active-site residue.

Belongs to the IlvD/Edd family. In terms of assembly, homodimer. The cofactor is [2Fe-2S] cluster. Requires Mg(2+) as cofactor.

It carries out the reaction (2R)-2,3-dihydroxy-3-methylbutanoate = 3-methyl-2-oxobutanoate + H2O. It catalyses the reaction (2R,3R)-2,3-dihydroxy-3-methylpentanoate = (S)-3-methyl-2-oxopentanoate + H2O. Its pathway is amino-acid biosynthesis; L-isoleucine biosynthesis; L-isoleucine from 2-oxobutanoate: step 3/4. The protein operates within amino-acid biosynthesis; L-valine biosynthesis; L-valine from pyruvate: step 3/4. Its function is as follows. Functions in the biosynthesis of branched-chain amino acids. Catalyzes the dehydration of (2R,3R)-2,3-dihydroxy-3-methylpentanoate (2,3-dihydroxy-3-methylvalerate) into 2-oxo-3-methylpentanoate (2-oxo-3-methylvalerate) and of (2R)-2,3-dihydroxy-3-methylbutanoate (2,3-dihydroxyisovalerate) into 2-oxo-3-methylbutanoate (2-oxoisovalerate), the penultimate precursor to L-isoleucine and L-valine, respectively. This is Dihydroxy-acid dehydratase from Shewanella halifaxensis (strain HAW-EB4).